A 296-amino-acid polypeptide reads, in one-letter code: Mitochondrial arginine transporter BAC2 (296 aa).

Solcar repeat units lie at residues 13–93 (GREF…FSRS), 104–187 (PSYR…VRER), and 198–282 (ENLR…ALRC). 6 consecutive transmembrane segments (helical) span residues 16 to 36 (FVAG…LDTL), 70 to 90 (AAPL…YAIF), 110 to 130 (ALGG…VELI), 162 to 181 (GLTI…FWTY), 204 to 224 (LVAG…LDVV), and 260 to 280 (TAVA…EVAL).

The protein belongs to the mitochondrial carrier (TC 2.A.29) family. In terms of tissue distribution, high expression in flowers, stamens, petals and pollen. Expressed in roots, leaves and stems.

Its subcellular location is the mitochondrion inner membrane. Its activity is regulated as follows. Inhibited by mercuric chloride. Mitochondrial arginine transporter that catalyzes the counter-exchange of arginine with lysine, ornithine, arginine, histidine and citrulline. Substrate preference in reconstituted proteoliposomes is arginine &gt; homoarginine &gt; citrulline &gt; histidine &gt; lysine &gt; ornithine. May be involved in the delivery of arginine, released from seed reserves, to mitochondrial arginase and the export of ornithine. May contribute to proline accumulation in response to hyperosmotic stress. The protein is Mitochondrial arginine transporter BAC2 (BAC2) of Arabidopsis thaliana (Mouse-ear cress).